Reading from the N-terminus, the 1409-residue chain is MKTLDLYGYTSIAQSFDKICISIASPESIRAMSYGEIKDISTTNYRTFKVEKGGLFCPKIFGPVNDDECLCGKYRKKRYRGIVCEKCGVEVTSSKVRRERMGHIELVSPVAHIWFLKSLPSRIGALLDMPLKAIENILYSGDFVVIDPVATPFAKGEVISEVVYNQARDAYGEDGFFALTGVEAIKELLTRLDLEAIRATLRNELESTSSEMKRKKVVKRLRLVENFIKSGNRPEWMILTVIPVLPPDLRPLVSLENGRPAVSDLNHHYRTIINRNNRLEKLLKLNPPAIMIRNEKRMLQEAVDALFDSSRRSYVSSRVGSMGYKKSLSDMLKGKQGRFRQNLLGKRVDYSGRSVIVVGPSLKLHQCGLPKKMALELFKPFICSKLKMYGIAPTVKLANKMIQSEKPDVWDVLDEVIKEHPILLNRAPTLHRLGLQAFDPVLIEGKAIQLHPLVCSAFNADFDGDQMAVHVPLSQEAQLEARVLMMSTNNILSPSNGRPIIVPSKDIVLGIYYLTLLEEDPEVREVQTFAEFSHVEYALHEGIVHTCSRIKYRMQKSAADGTVSSEIVETTPGRLILWQIFPQHKDLTFDLINQVLTVKEITSIVDLVYRSCGQRETVEFSDKLMYLGFKYASQSGISFGCKDMIIPDTKAAHVEDASEKIREFSIQYQDGLITKSERYNKVVDEWSKCTDLIARDMMKAISLCDEKGKYNSIYMMANSGARGSASQMKQLAGMRGLMAKPSGEIIETPIISNFREGLSVFEYFNSTHGARKGLADTALKTANSGYLTRRLVDVAQDCTVVEHDCGTSGGVVARAVIEGGVVVATLDSVVLGRVAAVDTYNPVTGEKLFTSGELIDESKLDKIRVAGLDAVKVRSPLTCESKQGICALCYGRDLAIGDLVSIGEAVGVIAAQSVGEPGTQLTMRTFHVGGTAMRGVEVSNLIALMDATVKLVNSNVVTDKYGNQIVMSRSCEVVLLDAAGNEKMRHSVPYGAKLYATEGQSVSMMEKIAEWDPYTIPIITEKTGTIKYVDLIYGVSINEVLDESTGISNRVVVDWKMHLQGANLRPRLVLLDDNGAVVTLSSDLEASYFVPIGAVLNVQDGQRVHAGDVITRIPRGSIKTRDITGGLPRVIELFEARKPKEHAIVSDVDGYVEFGKDYYRSKRRIFIRPVDKSLPVVEYLVPKGKHTIVNEGDFVHKGDLLMDGDPDQHDILRVLGTEALANYMISEIQQVYRLQGVKIDNKHIEVILRQMLQKVEITEPGDTMYLIGEHVSREEVMKLNRKLAEAGKKEVSYVPILQGITKASLDTNSFISAASFQETTKVLTEAAFAGKEDPLYGLKENVIVGRLIPAGTGFIMNKIKKLAMLDQSDYATYYNSELRGIMGDLGSSIIEEFQTPAPDGSISGSVVDY.

Zn(2+) contacts are provided by Cys69, Cys71, Cys84, and Cys87. Mg(2+) contacts are provided by Asp461, Asp463, and Asp465. Zn(2+) contacts are provided by Cys805, Cys879, Cys886, and Cys889.

Belongs to the RNA polymerase beta' chain family. As to quaternary structure, the RNAP catalytic core consists of 2 alpha, 1 beta, 1 beta' and 1 omega subunit. When a sigma factor is associated with the core the holoenzyme is formed, which can initiate transcription. The cofactor is Mg(2+). Zn(2+) is required as a cofactor.

It catalyses the reaction RNA(n) + a ribonucleoside 5'-triphosphate = RNA(n+1) + diphosphate. In terms of biological role, DNA-dependent RNA polymerase catalyzes the transcription of DNA into RNA using the four ribonucleoside triphosphates as substrates. The chain is DNA-directed RNA polymerase subunit beta' from Anaplasma phagocytophilum (strain HZ).